Consider the following 346-residue polypeptide: NADH-ubiquinone oxidoreductase chain 2 (346 aa).

Helical transmembrane passes span 1–21 (MNPH…TITI), 25–45 (HWVL…PLIS), 60–80 (FLTQ…NAWA), 95–115 (CLLL…HFWF), 124–144 (LMTA…LLLM), 149–169 (LNPA…GWMG), 178–195 (ILAF…IILV), 200–219 (LALL…FMAL), 242–262 (ATLM…GFMP), 274–294 (EMTP…FFYL), and 326–346 (AILA…HAIV).

The protein belongs to the complex I subunit 2 family.

The protein resides in the mitochondrion inner membrane. The enzyme catalyses a ubiquinone + NADH + 5 H(+)(in) = a ubiquinol + NAD(+) + 4 H(+)(out). Its function is as follows. Core subunit of the mitochondrial membrane respiratory chain NADH dehydrogenase (Complex I) that is believed to belong to the minimal assembly required for catalysis. Complex I functions in the transfer of electrons from NADH to the respiratory chain. The immediate electron acceptor for the enzyme is believed to be ubiquinone. The chain is NADH-ubiquinone oxidoreductase chain 2 (MT-ND2) from Anas acuta (Northern pintail).